Here is a 251-residue protein sequence, read N- to C-terminus: Methionine aminopeptidase (251 aa).

Substrate is bound at residue H76. A divalent metal cation contacts are provided by D93, D104, and H168. H175 is a binding site for substrate. Positions 202 and 233 each coordinate a divalent metal cation.

This sequence belongs to the peptidase M24A family. Methionine aminopeptidase type 1 subfamily. In terms of assembly, monomer. Co(2+) is required as a cofactor. The cofactor is Zn(2+). It depends on Mn(2+) as a cofactor. Fe(2+) serves as cofactor.

It carries out the reaction Release of N-terminal amino acids, preferentially methionine, from peptides and arylamides.. Functionally, removes the N-terminal methionine from nascent proteins. The N-terminal methionine is often cleaved when the second residue in the primary sequence is small and uncharged (Met-Ala-, Cys, Gly, Pro, Ser, Thr, or Val). Requires deformylation of the N(alpha)-formylated initiator methionine before it can be hydrolyzed. The protein is Methionine aminopeptidase of Staphylococcus epidermidis (strain ATCC 35984 / DSM 28319 / BCRC 17069 / CCUG 31568 / BM 3577 / RP62A).